The following is a 474-amino-acid chain: Glycogen synthase (474 aa).

Lysine 12 is an ADP-alpha-D-glucose binding site.

Belongs to the glycosyltransferase 1 family. Bacterial/plant glycogen synthase subfamily.

The catalysed reaction is [(1-&gt;4)-alpha-D-glucosyl](n) + ADP-alpha-D-glucose = [(1-&gt;4)-alpha-D-glucosyl](n+1) + ADP + H(+). Its pathway is glycan biosynthesis; glycogen biosynthesis. Functionally, synthesizes alpha-1,4-glucan chains using ADP-glucose. The protein is Glycogen synthase of Xanthomonas campestris pv. campestris (strain 8004).